The following is a 360-amino-acid chain: CFA/I fimbrial subunit E (360 aa).

The protein resides in the fimbrium. This is CFA/I fimbrial subunit E (cfaE) from Escherichia coli.